The chain runs to 146 residues: Hemoglobin subunit beta-2 (146 aa).

V1 is subject to N-acetylvaline. The region spanning 2–146 (HLHGDEKAAV…VASALAHKYH (145 aa)) is the Globin domain. An N6-succinyllysine modification is found at K17. At S44 the chain carries Phosphoserine. K59 is modified (N6-succinyllysine). Heme b contacts are provided by H63 and H92. Position 104 is an asymmetric dimethylarginine (R104). T123 is subject to Phosphothreonine.

It belongs to the globin family. In terms of assembly, heterotetramer of two alpha chains and two beta chains. As to expression, red blood cells.

Functionally, involved in oxygen transport from the lung to the various peripheral tissues. The protein is Hemoglobin subunit beta-2 (HBB2) of Tapirus terrestris (Lowland tapir).